Consider the following 347-residue polypeptide: MNPIVFSTILTTAIMGTMIVMTSSHWLMIWIGFEMNLLAIIPILMKKFNPRAMEAATKYFLTQATASMLLMMAIIINLMFSSQWTITKIFNPTASIIMTSALIMKLGLSPFHFWVPEVTQGIPLVSGLILLTWQKLAPMSVLYQIAPSINLDMLMTSALLSILVGGWGGLNQTQLRKIMAYSSIAHMGWMTAILTYNPTMTALNMLIYIMMTLTTFMLFMLNSSTTTLSLSHTWNKTPLITSLILITMLSLGGLPPLSGFIPKWMIIQELTKNDSIILPTSMAIMALLNLYFYMRLTYSTSLTMFPSTNNMKMKWQFENPKRMNFLPTLIIMSTLLLPLTPIMSTLN.

Helical transmembrane passes span 1–21 (MNPI…MIVM), 25–45 (HWLM…PILM), 60–80 (FLTQ…NLMF), 89–109 (IFNP…LGLS), 111–131 (FHFW…LILL), 149–169 (INLD…GWGG), 178–198 (IMAY…TYNP), 201–221 (TALN…LFML), 242–262 (SLIL…GFIP), 274–294 (DSII…YFYM), and 323–343 (MNFL…TPIM).

The protein belongs to the complex I subunit 2 family. Core subunit of respiratory chain NADH dehydrogenase (Complex I) which is composed of 45 different subunits. Interacts with TMEM242.

It localises to the mitochondrion inner membrane. It carries out the reaction a ubiquinone + NADH + 5 H(+)(in) = a ubiquinol + NAD(+) + 4 H(+)(out). Functionally, core subunit of the mitochondrial membrane respiratory chain NADH dehydrogenase (Complex I) which catalyzes electron transfer from NADH through the respiratory chain, using ubiquinone as an electron acceptor. Essential for the catalytic activity and assembly of complex I. The sequence is that of NADH-ubiquinone oxidoreductase chain 2 from Ceratotherium simum (White rhinoceros).